We begin with the raw amino-acid sequence, 242 residues long: Tryptophan synthase alpha chain (242 aa).

Residues E31 and D42 each act as proton acceptor in the active site.

The protein belongs to the TrpA family. Tetramer of two alpha and two beta chains.

It catalyses the reaction (1S,2R)-1-C-(indol-3-yl)glycerol 3-phosphate + L-serine = D-glyceraldehyde 3-phosphate + L-tryptophan + H2O. It participates in amino-acid biosynthesis; L-tryptophan biosynthesis; L-tryptophan from chorismate: step 5/5. In terms of biological role, the alpha subunit is responsible for the aldol cleavage of indoleglycerol phosphate to indole and glyceraldehyde 3-phosphate. The chain is Tryptophan synthase alpha chain from Staphylococcus aureus (strain Mu3 / ATCC 700698).